The sequence spans 191 residues: MLAIGITGSYASGKTFILDYLAEKGYKTFCADRCIKELYQDLSVQTQILKLLPELESFNIGKISNLIYNNDLAREKLQNFIYPLLIDKLILFKKENANSKFGFAEIPLLYEAKFDKYFDFVVTIYCSEEIRMQRAITRTSFDIEIYNKIKEIQLSQESKIAKADFAINSGVDMLDLEKQIEKLILVIARKL.

Residues 3-191 enclose the DPCK domain; it reads AIGITGSYAS…KLILVIARKL (189 aa). 11–16 is a binding site for ATP; sequence ASGKTF.

Belongs to the CoaE family.

Its subcellular location is the cytoplasm. It catalyses the reaction 3'-dephospho-CoA + ATP = ADP + CoA + H(+). The protein operates within cofactor biosynthesis; coenzyme A biosynthesis; CoA from (R)-pantothenate: step 5/5. In terms of biological role, catalyzes the phosphorylation of the 3'-hydroxyl group of dephosphocoenzyme A to form coenzyme A. The polypeptide is Dephospho-CoA kinase (Rickettsia felis (strain ATCC VR-1525 / URRWXCal2) (Rickettsia azadi)).